We begin with the raw amino-acid sequence, 166 residues long: Large ribosomal subunit protein uL10 (166 aa).

It belongs to the universal ribosomal protein uL10 family. In terms of assembly, part of the ribosomal stalk of the 50S ribosomal subunit. The N-terminus interacts with L11 and the large rRNA to form the base of the stalk. The C-terminus forms an elongated spine to which L12 dimers bind in a sequential fashion forming a multimeric L10(L12)X complex.

Forms part of the ribosomal stalk, playing a central role in the interaction of the ribosome with GTP-bound translation factors. The chain is Large ribosomal subunit protein uL10 from Streptococcus agalactiae serotype III (strain NEM316).